The primary structure comprises 595 residues: DNA-binding protein REB1 (595 aa).

Composition is skewed to basic and acidic residues over residues 25 to 46 (KSGEDDAVNKQKSVDWFLKEQD) and 54 to 71 (DPGRDQDQEDNAKHRDAN). Positions 25–208 (KSGEDDAVNK…IDDHVDDVSV (184 aa)) are disordered. Over residues 75–84 (AVAAAAVAAA) the composition is skewed to low complexity. Over residues 114–123 (KKSKKNKNKL) the composition is skewed to basic residues. Residues 163-176 (NIASQHPDFQQYLN) are compositionally biased toward polar residues. Residues 182–205 (EPKKEKSEERSYGDLSNIDDHVDD) show a composition bias toward basic and acidic residues. The HTH myb-type domain maps to 333-384 (HIFEQRGKWTPEEDAELARWCAEKEGQWSNIGKVLGRMPEDCRDRWRNYVKC). Residues 360-382 (WSNIGKVLGRMPEDCRDRWRNYV) constitute a DNA-binding region (H-T-H motif). A Myb-like domain is found at 385–490 (GPNRAANKWS…QCRYKWNKLL (106 aa)). Positions 414-456 (TAYEDGEDDEMKDSSTKIEDSGDADMLDVQDSDKKPSISNSKK) are disordered. The segment covering 434 to 443 (SGDADMLDVQ) has biased composition (acidic residues).

Its subcellular location is the nucleus. In terms of biological role, DNA-binding protein that recognizes sites within both the enhancer and the promoter of rRNA transcription, as well as upstream of many genes transcribed by RNA polymerase II. It is essential for cell growth. May stimulate or inhibit transcription. Specifically recognizes the sequence 5'-CCGGGTA-3' or 5'-CGGGTRR-3' (where R is any purine). The sequence is that of DNA-binding protein REB1 (REB1) from Kluyveromyces lactis (strain ATCC 8585 / CBS 2359 / DSM 70799 / NBRC 1267 / NRRL Y-1140 / WM37) (Yeast).